Here is a 182-residue protein sequence, read N- to C-terminus: Ribosomal RNA small subunit methyltransferase G (182 aa).

Residues Gly58, Phe63, 109–110 (IE), and Arg123 contribute to the S-adenosyl-L-methionine site.

Belongs to the methyltransferase superfamily. RNA methyltransferase RsmG family.

Its subcellular location is the cytoplasm. The enzyme catalyses guanosine(527) in 16S rRNA + S-adenosyl-L-methionine = N(7)-methylguanosine(527) in 16S rRNA + S-adenosyl-L-homocysteine. Its function is as follows. Specifically methylates the N7 position of guanine in position 527 of 16S rRNA. The chain is Ribosomal RNA small subunit methyltransferase G from Campylobacter fetus subsp. fetus (strain 82-40).